A 233-amino-acid chain; its full sequence is Rano class II histocompatibility antigen, A beta chain (233 aa).

The segment at 1 to 80 is beta-1; it reads DFVYQFKGLC…DTVCRYNYEE (80 aa). The Extracellular segment spans residues 1–194; sequence DFVYQFKGLC…RAQSESAQSK (194 aa). A glycan (N-linked (GlcNAc...) asparagine) is linked at Asn-14. A beta-2 region spans residues 81-184; that stretch reads TEVPTSLRRL…SLESPVTVEW (104 aa). The region spanning 93–181 is the Ig-like C1-type domain; the sequence is PNVAISLSRT…DHASLESPVT (89 aa). The interval 185–194 is connecting peptide; the sequence is RAQSESAQSK. A helical membrane pass occupies residues 195-215; that stretch reads MLSGIGGLVLGVIFLGLGLFI. Topologically, residues 216 to 233 are cytoplasmic; it reads RHKRQKGPQGPPPAGLLQ.

The protein belongs to the MHC class II family.

The protein localises to the membrane. Its function is as follows. Involved in the presentation of foreign antigens to the immune system. In Rattus norvegicus (Rat), this protein is Rano class II histocompatibility antigen, A beta chain (RT1-B).